The following is a 341-amino-acid chain: HTH-type transcriptional repressor PurR (341 aa).

In terms of domain architecture, HTH lacI-type spans alanine 2–valine 56. Residues isoleucine 4 to asparagine 23 constitute a DNA-binding region (H-T-H motif). A DNA-binding region spans residues serine 48–valine 56. Hypoxanthine is bound by residues tyrosine 73, arginine 190, threonine 192, phenylalanine 221, and aspartate 275.

As to quaternary structure, homodimer.

Its pathway is purine metabolism; purine nucleotide biosynthesis [regulation]. Functionally, is the main repressor of the genes involved in the de novo synthesis of purine nucleotides, regulating purB, purC, purEK, purF, purHD, purL, purMN and guaBA expression. PurR is allosterically activated to bind its cognate DNA by binding the purine corepressors, hypoxanthine or guanine, thereby effecting transcription repression. The sequence is that of HTH-type transcriptional repressor PurR from Salmonella paratyphi A (strain ATCC 9150 / SARB42).